Reading from the N-terminus, the 196-residue chain is dITP/XTP pyrophosphatase (196 aa).

Position 10–15 (threonine 10–lysine 15) interacts with substrate. Catalysis depends on aspartate 71, which acts as the Proton acceptor. Aspartate 71 lines the Mg(2+) pocket. Substrate contacts are provided by residues serine 72, phenylalanine 156 to aspartate 159, lysine 179, and histidine 184 to arginine 185.

The protein belongs to the HAM1 NTPase family. Homodimer. Requires Mg(2+) as cofactor.

It catalyses the reaction XTP + H2O = XMP + diphosphate + H(+). The catalysed reaction is dITP + H2O = dIMP + diphosphate + H(+). It carries out the reaction ITP + H2O = IMP + diphosphate + H(+). Functionally, pyrophosphatase that catalyzes the hydrolysis of nucleoside triphosphates to their monophosphate derivatives, with a high preference for the non-canonical purine nucleotides XTP (xanthosine triphosphate), dITP (deoxyinosine triphosphate) and ITP. Seems to function as a house-cleaning enzyme that removes non-canonical purine nucleotides from the nucleotide pool, thus preventing their incorporation into DNA/RNA and avoiding chromosomal lesions. The sequence is that of dITP/XTP pyrophosphatase from Haemophilus ducreyi (strain 35000HP / ATCC 700724).